We begin with the raw amino-acid sequence, 293 residues long: Acetylglutamate kinase (293 aa).

Substrate-binding positions include 60–61 (GG), R82, and N188.

The protein belongs to the acetylglutamate kinase family. ArgB subfamily.

It localises to the cytoplasm. The catalysed reaction is N-acetyl-L-glutamate + ATP = N-acetyl-L-glutamyl 5-phosphate + ADP. The protein operates within amino-acid biosynthesis; L-arginine biosynthesis; N(2)-acetyl-L-ornithine from L-glutamate: step 2/4. In terms of biological role, catalyzes the ATP-dependent phosphorylation of N-acetyl-L-glutamate. The polypeptide is Acetylglutamate kinase (Methanothermobacter thermautotrophicus (strain ATCC 29096 / DSM 1053 / JCM 10044 / NBRC 100330 / Delta H) (Methanobacterium thermoautotrophicum)).